The following is a 499-amino-acid chain: Aldehyde dehydrogenase 1 (499 aa).

NAD(+) is bound by residues 164 to 166 (IPW), 164 to 167 (IPWN), 190 to 193 (KPAE), 223 to 224 (GS), 243 to 244 (GS), 243 to 248 (GSTKVG), and 266 to 268 (ELG). Glu266 (proton acceptor) is an active-site residue. Cys300 (nucleophile) is an active-site residue. NAD(+)-binding positions include 346–350 (QQYEK) and 397–399 (EIF).

The protein belongs to the aldehyde dehydrogenase family. As to quaternary structure, homotetramer. In terms of tissue distribution, expressed in flowers and disk florets.

It carries out the reaction an aldehyde + NAD(+) + H2O = a carboxylate + NADH + 2 H(+). The enzyme catalyses an aldehyde + NADP(+) + H2O = a carboxylate + NADPH + 2 H(+). It catalyses the reaction octanal + NADP(+) + H2O = octanoate + NADPH + 2 H(+). The catalysed reaction is (1R,3R)-chrysanthemal + NAD(+) + H2O = (1R,3R)-chrysanthemate + NADH + 2 H(+). It carries out the reaction (1R,3R)-chrysanthemal + NADP(+) + H2O = (1R,3R)-chrysanthemate + NADPH + 2 H(+). The enzyme catalyses (E)-hept-2-enal + NADP(+) + H2O = (E)-hept-2-enoate + NADPH + 2 H(+). It catalyses the reaction dodecanal + NADP(+) + H2O = dodecanoate + NADPH + 2 H(+). The catalysed reaction is citral + NADP(+) + H2O = 3,7-dimethylocta-2,6-dienoate + NADPH + 2 H(+). It carries out the reaction perillyl aldehyde + NADP(+) + H2O = perillate + NADPH + 2 H(+). The enzyme catalyses (2E,6E)-farnesal + NADP(+) + H2O = (2E,6E)-farnesoate + NADPH + 2 H(+). It catalyses the reaction (S)-(-)-citronellal + NADP(+) + H2O = (S)-(-)-citronellate + NADPH + 2 H(+). It functions in the pathway isoprenoid biosynthesis. In terms of biological role, component of the monoterpenoid pyrethrins biosynthesis; pyrethrins are widely used plant-derived pesticide. Mediates the conversion of trans-chrysanthemal into trans-chrysanthemic acid. Can also use octanal, hept-2-enal, dodecanal, citral, farnesal, citronellal and perillyl aldehyde as substrates. The sequence is that of Aldehyde dehydrogenase 1 from Tanacetum cinerariifolium (Dalmatian daisy).